A 189-amino-acid chain; its full sequence is MASYSMGDLKKGLKIEIDGIPFKIVEYQHVKPGKGPAFVRIKIKSFIDGKVLEKTFHAGDKCEAPNLEDKTMQYLYDDGENCQFMDTQTYEQVAISDDDVGEAKKWMLDGMMVDVLFHNGKAIGVEVPQVVELKIIETAPNFKGDTQGSNKKPATLETGAVVQIPFHVLEGEVIRVDTVRGEYIERANK.

Belongs to the elongation factor P family.

It is found in the cytoplasm. Its pathway is protein biosynthesis; polypeptide chain elongation. In terms of biological role, involved in peptide bond synthesis. Stimulates efficient translation and peptide-bond synthesis on native or reconstituted 70S ribosomes in vitro. Probably functions indirectly by altering the affinity of the ribosome for aminoacyl-tRNA, thus increasing their reactivity as acceptors for peptidyl transferase. The sequence is that of Elongation factor P from Campylobacter jejuni subsp. doylei (strain ATCC BAA-1458 / RM4099 / 269.97).